We begin with the raw amino-acid sequence, 662 residues long: Translation factor GUF1, mitochondrial (662 aa).

A mitochondrion-targeting transit peptide spans methionine 1–tyrosine 28. Residues glutamate 62–aspartate 244 enclose the tr-type G domain. GTP contacts are provided by residues alanine 71–serine 78, aspartate 137–histidine 141, and asparagine 191–aspartate 194.

It belongs to the TRAFAC class translation factor GTPase superfamily. Classic translation factor GTPase family. LepA subfamily.

Its subcellular location is the mitochondrion inner membrane. It carries out the reaction GTP + H2O = GDP + phosphate + H(+). In terms of biological role, promotes mitochondrial protein synthesis. May act as a fidelity factor of the translation reaction, by catalyzing a one-codon backward translocation of tRNAs on improperly translocated ribosomes. Binds to mitochondrial ribosomes in a GTP-dependent manner. The sequence is that of Translation factor GUF1, mitochondrial from Meyerozyma guilliermondii (strain ATCC 6260 / CBS 566 / DSM 6381 / JCM 1539 / NBRC 10279 / NRRL Y-324) (Yeast).